Here is a 1288-residue protein sequence, read N- to C-terminus: Peroxidasin homolog (1288 aa).

A signal peptide spans 1–16; it reads MNLLLYLLLLVPWVLG. The region spanning 17-51 is the LRRNT domain; sequence SEDGCPAKCTCDKKGFTVDCSNAGLTRIPKGISSN. LRR repeat units lie at residues 27-49, 50-72, 73-96, 97-120, 122-143, 145-168, and 204-227; these read CDKK…KGIS, SNVR…DLEG, FPLL…ILDH, LPEL…ASES, PLAS…WLLQ, FPEL…LFEN, and AYCT…LLKC. The LRRCT domain occupies 180–228; the sequence is NPWNCDCRVTKVKALLRKVEWERKAYCTNPVELRHQAIDEVEESLLKCA. The N-linked (GlcNAc...) asparagine glycan is linked to Asn-247. Residues 304-323 form a disordered region; the sequence is LRQSHHSNGAPQFTYKPRDN. Ig-like C2-type domains follow at residues 314–400 and 407–494; these read PQFT…FSLD and PNIY…AKLT. An intrachain disulfide couples Cys-335 to Cys-384. 2 LRR repeats span residues 356–381 and 387–412; these read SSRK…DSGR and VNSL…IYEG. Residues Cys-428 and Cys-478 are joined by a disulfide bond. A glycan (N-linked (GlcNAc...) asparagine) is linked at Asn-594. Cys-624 and Cys-640 are joined by a disulfide. Asp-718 contributes to the heme b binding site. His-719 functions as the Proton acceptor in the catalytic mechanism. Residue Asp-720 participates in Ca(2+) binding. 2 disulfides stabilise this stretch: Cys-739/Cys-749 and Cys-743/Cys-770. A glycan (N-linked (GlcNAc...) asparagine) is linked at Asn-740. Ca(2+) contacts are provided by Thr-802, Phe-804, Asp-806, and Ser-808. Asn-857 carries an N-linked (GlcNAc...) asparagine glycan. The heme b site is built by Glu-876 and His-972. LRR repeat units follow at residues 998–1022 and 1049–1073; these read KAFF…LFAS and SLDL…EYRQ. Cystine bridges form between Cys-1075-Cys-1132 and Cys-1173-Cys-1200. The stretch at 1168–1189 is one LRR 12 repeat; that stretch reads LARLLCDNGDEIDRIQKDVFMY.

Belongs to the peroxidase family. XPO subfamily. Ca(2+) serves as cofactor. Requires heme b as cofactor.

Its subcellular location is the secreted. It is found in the extracellular space. The protein resides in the extracellular matrix. The catalysed reaction is L-lysyl-[collagen] + L-methionyl-[collagen] + H2O2 = [collagen]-L-lysyl-N-S-L-methionyl-[collagen] + 2 H2O + H(+). The enzyme catalyses bromide + H2O2 = hypobromite + H2O. It catalyses the reaction L-lysyl-[collagen] + L-methionyl-[collagen] + hypobromite = [collagen]-L-lysyl-N-S-L-methionyl-[collagen] + bromide + H2O + H(+). It carries out the reaction L-tyrosyl-[protein] + bromide + H2O2 + H(+) = 3-bromo-L-tyrosyl-[protein] + 2 H2O. The catalysed reaction is hypobromite + L-tyrosyl-[protein] + H(+) = 3-bromo-L-tyrosyl-[protein] + H2O. Its function is as follows. Catalyzes the two-electron oxidation of bromide by hydrogen peroxide and generates hypobromite as a reactive intermediate which mediates the formation of sulfilimine cross-links between methionine and hydroxylysine residues within an uncross-linked collagen IV NC1 hexamer. Plays a role in the attachment of tissues and in axonal guidance during early developmental stages. May functionally antagonize the peroxidasin pxn-2 to maintain neuronal development. The sequence is that of Peroxidasin homolog from Caenorhabditis briggsae.